Reading from the N-terminus, the 131-residue chain is Maturin (131 aa).

The residue at position 34 (tyrosine 34) is a Phosphotyrosine. The segment covering 107–120 has biased composition (acidic residues); sequence FEEYSADVEEEEPE. Residues 107–131 form a disordered region; sequence FEEYSADVEEEEPEADHPQMGVSQQ.

Belongs to the MTURN family. Post-translationally, phosphorylation at Tyr-34 is essential for its ability to promote megakaryocyte differentiation. As to expression, expressed in the thymus, bone marrow and spleen.

Its subcellular location is the cytoplasm. In terms of biological role, promotes megakaryocyte differentiation by enhancing ERK and JNK signaling as well as up-regulating RUNX1 and FLI1 expression. Represses NF-kappa-B transcriptional activity by inhibiting phosphorylation of RELA at 'Ser- 536'. May be involved in early neuronal development. This chain is Maturin (Mturn), found in Mus musculus (Mouse).